The sequence spans 234 residues: Synaptogyrin-1 (234 aa).

M1 carries the post-translational modification N-acetylmethionine. Residues 1 to 23 lie on the Cytoplasmic side of the membrane; sequence MEGGAYGAGKAGGAFDPYTLVRQ. Residues 20–173 form the MARVEL domain; that stretch reads LVRQPHTILR…QAVLAFQRYQ (154 aa). A helical transmembrane segment spans residues 24 to 44; it reads PHTILRVVSWVFSIVVFGSIV. Residues 45–71 lie on the Lumenal side of the membrane; sequence NEGYLNNPEEEEEFCIYNRNPNACSYG. A helical membrane pass occupies residues 72 to 92; the sequence is VTVGVLAFLTCLLYLALDVYF. The Cytoplasmic portion of the chain corresponds to 93–103; it reads PQISSVKDRKK. Residues 104–124 traverse the membrane as a helical segment; that stretch reads AVLSDIGVSAFWAFFWFVGFC. Topologically, residues 125–148 are lumenal; sequence FLANQWQVSKPKDNPLNEGTDAAR. The chain crosses the membrane as a helical span at residues 149 to 169; that stretch reads AAIAFSFFSIFTWAGQAVLAF. At 170–234 the chain is on the cytoplasmic side; that stretch reads QRYQIGADSA…EPQGYQSQGY (65 aa). Residues 201-234 form a disordered region; sequence EPSAGSDPAGMGGTYQHPANAFDAEPQGYQSQGY.

It belongs to the synaptogyrin family.

It is found in the cytoplasmic vesicle. The protein resides in the secretory vesicle. Its subcellular location is the synaptic vesicle membrane. It localises to the melanosome. Its function is as follows. May play a role in regulated exocytosis. Modulates the localization of synaptophysin/SYP into synaptic-like microvesicles and may therefore play a role in synaptic-like microvesicle formation and/or maturation. Involved in the regulation of short-term and long-term synaptic plasticity. This Mus musculus (Mouse) protein is Synaptogyrin-1.